Here is a 605-residue protein sequence, read N- to C-terminus: MNITKIKERQKRIRNFSIIAHIDHGKSTLADRILEITGTIDKRVMQTQILDSMDLERERGITIKLNAVQILYQAQNKQQYIMHLIDTPGHVDFSYEVSRSLAACEGAILVIDAAQGIQSQTLANVYLAIENNLTIIPVLNKVDLPSADVPRVKGEIKDILNIDPEMAISASGKTGAGVIDILERIVTQISPPKGDPEAPLQALIFDSYFDPYKGVVPSIRIINGTVKKGDQILFMAGKHVYEVVEVGVYNPKQISKDYLAPGDVGYLTAAIKSINHVSVGDTITSNHKPAIQPLPGYKKMNSVVFCGLYPIEINKYEALKEALEKLKLSDSSLVFEPESSSALGLGFRTGFLGLLHMEIIQERISREFGVEVITTAPSVIYHVYNLKGEKILVDNPSKLPSPQMIERIEEPFIKATIICPEIYIGKVMELSQNKRGSLQNIEYIDQQRTKINYLLPFSETIYNYFDKLKSLTKGYASFDYEMENYRVSKLQKMDILLNGEVVDALSLIVHKDFAYSRGKTICETLKSFIPKQMFEIPIQAALGKKIIARETIKAMRKDVTAKLYGGDVTRKKKLLEKQKKGKKKMKTLGKVDLPQKAFLAILSAK.

The tr-type G domain occupies 11–193 (KRIRNFSIIA…RIVTQISPPK (183 aa)). GTP contacts are provided by residues 23–28 (DHGKST) and 140–143 (NKVD).

The protein belongs to the TRAFAC class translation factor GTPase superfamily. Classic translation factor GTPase family. LepA subfamily.

The protein localises to the cell membrane. It catalyses the reaction GTP + H2O = GDP + phosphate + H(+). Functionally, required for accurate and efficient protein synthesis under certain stress conditions. May act as a fidelity factor of the translation reaction, by catalyzing a one-codon backward translocation of tRNAs on improperly translocated ribosomes. Back-translocation proceeds from a post-translocation (POST) complex to a pre-translocation (PRE) complex, thus giving elongation factor G a second chance to translocate the tRNAs correctly. Binds to ribosomes in a GTP-dependent manner. The sequence is that of Elongation factor 4 from Phytoplasma australiense.